Consider the following 830-residue polypeptide: Leucine--tRNA ligase (830 aa).

Residues 34–44 (PYPSGNIHMGH) carry the 'HIGH' region motif. The 'KMSKS' region signature appears at 592–596 (KMSKS). Lys595 lines the ATP pocket.

Belongs to the class-I aminoacyl-tRNA synthetase family.

Its subcellular location is the cytoplasm. The enzyme catalyses tRNA(Leu) + L-leucine + ATP = L-leucyl-tRNA(Leu) + AMP + diphosphate. The sequence is that of Leucine--tRNA ligase from Ehrlichia ruminantium (strain Welgevonden).